We begin with the raw amino-acid sequence, 894 residues long: Protein translocase subunit SecA (894 aa).

Residues Q87, 105–109 (GEGKT), and D512 each bind ATP. A disordered region spans residues 836–870 (EVEQAERERQAHAEQESSHYHAEGEGQDFSDLHIG). Zn(2+) contacts are provided by C875, C877, C886, and H887.

This sequence belongs to the SecA family. As to quaternary structure, monomer and homodimer. Part of the essential Sec protein translocation apparatus which comprises SecA, SecYEG and auxiliary proteins SecDF-YajC and YidC. The cofactor is Zn(2+).

The protein localises to the cell inner membrane. It is found in the cytoplasm. The catalysed reaction is ATP + H2O + cellular proteinSide 1 = ADP + phosphate + cellular proteinSide 2.. In terms of biological role, part of the Sec protein translocase complex. Interacts with the SecYEG preprotein conducting channel. Has a central role in coupling the hydrolysis of ATP to the transfer of proteins into and across the cell membrane, serving both as a receptor for the preprotein-SecB complex and as an ATP-driven molecular motor driving the stepwise translocation of polypeptide chains across the membrane. This chain is Protein translocase subunit SecA, found in Glaesserella parasuis serovar 5 (strain SH0165) (Haemophilus parasuis).